The following is a 648-amino-acid chain: 1-deoxy-D-xylulose-5-phosphate synthase (648 aa).

Thiamine diphosphate is bound by residues His74 and 115–117 (GHA). A Mg(2+)-binding site is contributed by Asp146. Residues 147–148 (GA), Asn176, Tyr292, and Glu375 contribute to the thiamine diphosphate site. Asn176 lines the Mg(2+) pocket.

It belongs to the transketolase family. DXPS subfamily. As to quaternary structure, homodimer. It depends on Mg(2+) as a cofactor. The cofactor is thiamine diphosphate.

It catalyses the reaction D-glyceraldehyde 3-phosphate + pyruvate + H(+) = 1-deoxy-D-xylulose 5-phosphate + CO2. It participates in metabolic intermediate biosynthesis; 1-deoxy-D-xylulose 5-phosphate biosynthesis; 1-deoxy-D-xylulose 5-phosphate from D-glyceraldehyde 3-phosphate and pyruvate: step 1/1. Functionally, catalyzes the acyloin condensation reaction between C atoms 2 and 3 of pyruvate and glyceraldehyde 3-phosphate to yield 1-deoxy-D-xylulose-5-phosphate (DXP). This Synechococcus sp. (strain JA-2-3B'a(2-13)) (Cyanobacteria bacterium Yellowstone B-Prime) protein is 1-deoxy-D-xylulose-5-phosphate synthase.